The sequence spans 350 residues: Opsin, longwave 563 nm (350 aa).

Residues 1–45 (HRLAGRHPQDNYEDSTQSSIFTYTNSNSTRGPFEGPNYHIAPRWV) are Extracellular-facing. The N-linked (GlcNAc...) asparagine glycan is linked to N27. The chain crosses the membrane as a helical span at residues 46–70 (YHLTSVWMLFVVVASVFTNGLVLAA). Over 71–82 (TMKFKKLRHPLN) the chain is Cytoplasmic. The chain crosses the membrane as a helical span at residues 83–108 (WILVNLAIADLAETVIASTISVVNQV). The Extracellular segment spans residues 109–122 (HGYFVLGHPMCVLE). An intrachain disulfide couples C119 to C196. The helical transmembrane segment at 123-142 (GYTVSLCGITGLWSLAIISW) threads the bilayer. The Cytoplasmic segment spans residues 143-161 (ERWLVVCKPFGNVRFDAKL). Residues 162–185 (AIVGVAFSWIWSAVWTAPPIFGWS) traverse the membrane as a helical segment. The Extracellular segment spans residues 186–211 (RYWPHGLKTSCGPDVFSGSSYPGVQS). Residues 212–239 (YMIVLMITCCFLPLGIIVLCYLQVWLAI) form a helical membrane-spanning segment. The Cytoplasmic portion of the chain corresponds to 240-261 (RAVAKQQKESESTQKAEKEVTR). A helical membrane pass occupies residues 262–285 (MVVVMIVAYCVCWGPYTFFACFAA). Residues 286–293 (ANPGYAFH) lie on the Extracellular side of the membrane. The helical transmembrane segment at 294–318 (PLMAALPAYFAKSATIYNPIIYVFM) threads the bilayer. K305 bears the N6-(retinylidene)lysine mark. Over 319–350 (NRQFRNCILQLFGKKVDDGSELSSASKTEVSS) the chain is Cytoplasmic.

This sequence belongs to the G-protein coupled receptor 1 family. Opsin subfamily. In terms of processing, phosphorylated on some or all of the serine and threonine residues present in the C-terminal region. As to expression, the color pigments are found in the cone photoreceptor cells.

It localises to the membrane. Visual pigments are the light-absorbing molecules that mediate vision. They consist of an apoprotein, opsin, covalently linked to cis-retinal. The protein is Opsin, longwave 563 nm of Callithrix jacchus (White-tufted-ear marmoset).